Consider the following 271-residue polypeptide: Formamidopyrimidine-DNA glycosylase (271 aa).

Residue proline 2 is the Schiff-base intermediate with DNA of the active site. Glutamate 3 serves as the catalytic Proton donor. The active-site Proton donor; for beta-elimination activity is lysine 58. DNA is bound by residues histidine 92, arginine 111, and lysine 152. Residues 237–271 (YVYGKVQKPCKICNNIITLIRQNGRSTYFCNACQN) form an FPG-type zinc finger. The active-site Proton donor; for delta-elimination activity is arginine 261.

This sequence belongs to the FPG family. In terms of assembly, monomer. The cofactor is Zn(2+).

It carries out the reaction Hydrolysis of DNA containing ring-opened 7-methylguanine residues, releasing 2,6-diamino-4-hydroxy-5-(N-methyl)formamidopyrimidine.. The enzyme catalyses 2'-deoxyribonucleotide-(2'-deoxyribose 5'-phosphate)-2'-deoxyribonucleotide-DNA = a 3'-end 2'-deoxyribonucleotide-(2,3-dehydro-2,3-deoxyribose 5'-phosphate)-DNA + a 5'-end 5'-phospho-2'-deoxyribonucleoside-DNA + H(+). In terms of biological role, involved in base excision repair of DNA damaged by oxidation or by mutagenic agents. Acts as a DNA glycosylase that recognizes and removes damaged bases. Has a preference for oxidized purines, such as 7,8-dihydro-8-oxoguanine (8-oxoG). Has AP (apurinic/apyrimidinic) lyase activity and introduces nicks in the DNA strand. Cleaves the DNA backbone by beta-delta elimination to generate a single-strand break at the site of the removed base with both 3'- and 5'-phosphates. This is Formamidopyrimidine-DNA glycosylase from Wolbachia sp. subsp. Drosophila simulans (strain wRi).